The primary structure comprises 477 residues: Mannitol 2-dehydrogenase (477 aa).

19-30 (IVHIGVGNFHRA) serves as a coordination point for NAD(+).

The protein belongs to the mannitol dehydrogenase family. Monomer.

It carries out the reaction D-mannitol + NAD(+) = D-fructose + NADH + H(+). In Cereibacter sphaeroides (Rhodobacter sphaeroides), this protein is Mannitol 2-dehydrogenase (mtlK).